The primary structure comprises 316 residues: Acetyl-coenzyme A carboxylase carboxyl transferase subunit alpha (316 aa).

Residues 39-293 enclose the CoA carboxyltransferase C-terminal domain; that stretch reads RLQDKSHALT…RQTLLAQLES (255 aa).

Belongs to the AccA family. As to quaternary structure, acetyl-CoA carboxylase is a heterohexamer composed of biotin carboxyl carrier protein (AccB), biotin carboxylase (AccC) and two subunits each of ACCase subunit alpha (AccA) and ACCase subunit beta (AccD).

It localises to the cytoplasm. It carries out the reaction N(6)-carboxybiotinyl-L-lysyl-[protein] + acetyl-CoA = N(6)-biotinyl-L-lysyl-[protein] + malonyl-CoA. It functions in the pathway lipid metabolism; malonyl-CoA biosynthesis; malonyl-CoA from acetyl-CoA: step 1/1. In terms of biological role, component of the acetyl coenzyme A carboxylase (ACC) complex. First, biotin carboxylase catalyzes the carboxylation of biotin on its carrier protein (BCCP) and then the CO(2) group is transferred by the carboxyltransferase to acetyl-CoA to form malonyl-CoA. In Azotobacter vinelandii (strain DJ / ATCC BAA-1303), this protein is Acetyl-coenzyme A carboxylase carboxyl transferase subunit alpha.